Consider the following 458-residue polypeptide: MILAVIGINHETASVETREQLAFSSKQVKELVQKLIEGQPIKEASVLSTCNRTEVHFTVNTGQIEAGKNHIMTYLSDFSDLDPREYVDHLYFITDQEAVSHIFKVTAGLNSLVTGETEILGQVKKAYQLSDEAGGVDSIFHGLYQQALRTGKRVHRETGINDNAASVSYASVELATKIFGSLQNRRALIIGAGKMSELAARHLYSNGVKDVIVINRTIERAKNLADKFGGLYASYDQLSEWLNEIDIVITSTGAPHFVIKEEQIKRAMKSRKYSPMFLIDIAVPRDVEPSVNNQDNAYLYTIDDLEAVVESNMQERQEEARNAELIISEEVAEFMVWYKTRDVVPLISALREKAEDVRKMELEKYHKKLKNLSPKEQEAVDKLTKSIVNKILKEPVLRIKEFAVEDKSELYMATLAQLFDLEDEVIPKDGEEHSSSKEVESVTQSSTERGHHESDFHN.

Substrate-binding positions include 49 to 52 (TCNR), serine 111, 116 to 118 (ETE), and glutamine 122. Cysteine 50 acts as the Nucleophile in catalysis. 191–196 (GAGKMS) serves as a coordination point for NADP(+). Composition is skewed to basic and acidic residues over residues 426–440 (IPKD…KEVE) and 448–458 (ERGHHESDFHN). The disordered stretch occupies residues 426 to 458 (IPKDGEEHSSSKEVESVTQSSTERGHHESDFHN).

This sequence belongs to the glutamyl-tRNA reductase family. As to quaternary structure, homodimer.

It catalyses the reaction (S)-4-amino-5-oxopentanoate + tRNA(Glu) + NADP(+) = L-glutamyl-tRNA(Glu) + NADPH + H(+). Its pathway is porphyrin-containing compound metabolism; protoporphyrin-IX biosynthesis; 5-aminolevulinate from L-glutamyl-tRNA(Glu): step 1/2. Its function is as follows. Catalyzes the NADPH-dependent reduction of glutamyl-tRNA(Glu) to glutamate 1-semialdehyde (GSA). The sequence is that of Glutamyl-tRNA reductase from Natranaerobius thermophilus (strain ATCC BAA-1301 / DSM 18059 / JW/NM-WN-LF).